The sequence spans 194 residues: Imidazoleglycerol-phosphate dehydratase (194 aa).

The protein belongs to the imidazoleglycerol-phosphate dehydratase family.

It localises to the cytoplasm. The catalysed reaction is D-erythro-1-(imidazol-4-yl)glycerol 3-phosphate = 3-(imidazol-4-yl)-2-oxopropyl phosphate + H2O. Its pathway is amino-acid biosynthesis; L-histidine biosynthesis; L-histidine from 5-phospho-alpha-D-ribose 1-diphosphate: step 6/9. The chain is Imidazoleglycerol-phosphate dehydratase from Bacillus velezensis (strain DSM 23117 / BGSC 10A6 / LMG 26770 / FZB42) (Bacillus amyloliquefaciens subsp. plantarum).